The primary structure comprises 331 residues: Glutaminase (331 aa).

Residues Ser-77, Asn-129, Glu-173, Asn-180, Tyr-204, Tyr-256, and Val-274 each coordinate substrate.

The protein belongs to the glutaminase family. In terms of assembly, homotetramer.

The catalysed reaction is L-glutamine + H2O = L-glutamate + NH4(+). This is Glutaminase from Oceanobacillus iheyensis (strain DSM 14371 / CIP 107618 / JCM 11309 / KCTC 3954 / HTE831).